The primary structure comprises 510 residues: Light-independent protochlorophyllide reductase subunit B (510 aa).

D36 contacts [4Fe-4S] cluster. The Proton donor role is filled by D296. Residue 431-432 (GM) participates in substrate binding.

This sequence belongs to the ChlB/BchB/BchZ family. In terms of assembly, protochlorophyllide reductase is composed of three subunits; ChlL, ChlN and ChlB. Forms a heterotetramer of two ChlB and two ChlN subunits. [4Fe-4S] cluster is required as a cofactor.

It localises to the plastid. It is found in the chloroplast. The catalysed reaction is chlorophyllide a + oxidized 2[4Fe-4S]-[ferredoxin] + 2 ADP + 2 phosphate = protochlorophyllide a + reduced 2[4Fe-4S]-[ferredoxin] + 2 ATP + 2 H2O. Its pathway is porphyrin-containing compound metabolism; chlorophyll biosynthesis (light-independent). Functionally, component of the dark-operative protochlorophyllide reductase (DPOR) that uses Mg-ATP and reduced ferredoxin to reduce ring D of protochlorophyllide (Pchlide) to form chlorophyllide a (Chlide). This reaction is light-independent. The NB-protein (ChlN-ChlB) is the catalytic component of the complex. This Stigeoclonium helveticum (Green alga) protein is Light-independent protochlorophyllide reductase subunit B.